The following is an 807-amino-acid chain: MTSQIQDLLATDQDLLLMQEGTMMRKVRTKSWKKLRYFRLQNDGMTVWHGSQPESMPKPTFSISDVERIRKGQDSELLRYLVEEFPLEQGFTVVFHGRRPNLDLVANSVEEAQIWMRGLQLLVDLVASMDHQEQMDQMLNEWFQQADRNQDGRMSFREAQRLLLLMNVEMDEEYAFSLFQEADVTQSDDLGSEEFVQFYKALTKRTEIEEIFEDFSSDKQKLTLLEFVDFLRKEQKEKDHAPDLALELIDRYEPSENGRLLHVLSKDGFLKYLCSKDGNIFNSDCLPIYQDMTQPLSHYYINSSHNTYLVGDQLCGQSSVEGYIRALKRGCRCVEVDTWDGPDGEPVVYHGHTLTSRILFKDVLATLAQYAFQSSDYPLILSLENHCTWEQQRTMAHHLTEILGEQLLRNTLEGLLVDSMPSPEQLRGKILVKGKKLRTIEVDKEEEEEEEEEELEKDEGPDLDPASPELDTQPQPETQGQAAGNKKERKKKVMKCPMSCLLICGHVMAQAPSSIPESILLSKQFLLLSSTTIMCPDLSALVVYLRTVPFCSFTHSKENYHIYDISSFSESKAKNLIKEAGNEFVQHNARQLCRVYPSGLRTDSSNFNPQEHWNVGCQMVAMNMQTAGSAMDICDGLFRQNGGSGYVLKPEFLRDTQSSFNPERPISLYKAQILVVQVISGQQLPKVDKTKETTVVDPLVKVELYGVPEDTKEQETSHVENNGINPYWGETFYFRLQVPELAMLRFVVKDYSRKSRNNFIGQYTLPWTCMKQGYRHVSLLSRDGTSLNPASIFVYTCMQEDLDMDEP.

Positions 16–124 (LLMQEGTMMR…WMRGLQLLVD (109 aa)) constitute a PH domain. Positions 26-53 (KVRTKSWKKLRYFRLQNDGMTVWHGSQP) are substrate binding. EF-hand domains lie at 134-169 (QMDQMLNEWFQQADRNQDGRMSFREAQRLLLLMNVE), 170-205 (MDEEYAFSLFQEADVTQSDDLGSEEFVQFYKALTKR), and 203-237 (TKRTEIEEIFEDFSSDKQKLTLLEFVDFLRKEQKE). 9 residues coordinate Ca(2+): aspartate 147, asparagine 149, aspartate 151, arginine 153, glutamate 158, aspartate 183, serine 187, aspartate 189, and glutamate 194. Positions 213-243 (EDFSSDKQKLTLLEFVDFLRKEQKEKDHAPD) match the GBA motif. The PI-PLC X-box domain maps to 290–435 (QDMTQPLSHY…LRGKILVKGK (146 aa)). Residue histidine 305 is part of the active site. Ca(2+) is bound by residues asparagine 306, glutamate 335, and aspartate 337. Histidine 350 is an active-site residue. Residue glutamate 384 participates in Ca(2+) binding. Residues lysine 433 and lysine 435 each coordinate substrate. Positions 442–490 (VDKEEEEEEEEEELEKDEGPDLDPASPELDTQPQPETQGQAAGNKKERK) are disordered. Residues 443-462 (DKEEEEEEEEEELEKDEGPD) show a composition bias toward acidic residues. Positions 470–482 (LDTQPQPETQGQA) are enriched in polar residues. One can recognise a PI-PLC Y-box domain in the interval 538 to 654 (LSALVVYLRT…GYVLKPEFLR (117 aa)). Substrate-binding residues include serine 567 and arginine 594. Positions 654–781 (RDTQSSFNPE…QGYRHVSLLS (128 aa)) constitute a C2 domain. The Ca(2+) site is built by aspartate 697, asparagine 721, aspartate 750, and tyrosine 751. A PDZ-binding motif is present at residues 776–779 (HVSL).

Interacts with GRIP1. Interacts (via GBA motif) with guanine nucleotide-binding protein G(i) alpha subunit GNAI3 (inactive GDP-bound form)l low-affinity interaction. Ca(2+) serves as cofactor.

It is found in the membrane. The protein resides in the nucleus. The protein localises to the cytoplasm. Its subcellular location is the endoplasmic reticulum. The enzyme catalyses a 1,2-diacyl-sn-glycero-3-phospho-(1D-myo-inositol-4,5-bisphosphate) + H2O = 1D-myo-inositol 1,4,5-trisphosphate + a 1,2-diacyl-sn-glycerol + H(+). The catalysed reaction is a 1,2-diacyl-sn-glycero-3-phospho-(1D-myo-inositol) + H2O = 1D-myo-inositol 1-phosphate + a 1,2-diacyl-sn-glycerol + H(+). Functionally, hydrolyzes the phosphatidylinositol 4,5-bisphosphate (PIP2) to generate 2 second messenger molecules diacylglycerol (DAG) and inositol 1,4,5-trisphosphate (IP3). DAG mediates the activation of protein kinase C (PKC), while IP3 releases Ca(2+) from intracellular stores. Required for acrosome reaction in sperm during fertilization, probably by acting as an important enzyme for intracellular Ca(2+) mobilization in the zona pellucida-induced acrosome reaction. May play a role in cell growth. Modulates the liver regeneration in cooperation with nuclear PKC. Overexpression up-regulates the Erk signaling pathway and proliferation. This is 1-phosphatidylinositol 4,5-bisphosphate phosphodiesterase delta-4 from Mus musculus (Mouse).